Reading from the N-terminus, the 431-residue chain is Probable indole-3-pyruvate monooxygenase YUCCA7 (431 aa).

36–41 (GAGPSG) contributes to the FAD binding site. Residue 207–212 (GCGNSG) coordinates NADP(+).

Belongs to the FMO family. FAD is required as a cofactor. Expressed in shoot apex regions and siliques, and at high levels in roots. Detected in flowers, stems and leaves.

The enzyme catalyses indole-3-pyruvate + NADPH + O2 + H(+) = (indol-3-yl)acetate + CO2 + NADP(+) + H2O. It functions in the pathway plant hormone metabolism; auxin biosynthesis. Involved in auxin biosynthesis. Belongs to the set of redundant YUCCA genes probably responsible for auxin biosynthesis in roots. The polypeptide is Probable indole-3-pyruvate monooxygenase YUCCA7 (YUC7) (Arabidopsis thaliana (Mouse-ear cress)).